The sequence spans 229 residues: MAKKKAFIPFFYFLSIVFLPWLISLCCNKSLKTWITNWWNTRQCETFLNDIQEKSFLEKFIQLEELFQLDEMIKEYPETNLQQFRLGIHKETIQFIKIHNEYNIHTILHFSTNLISFVILSGYSFWGKEKLFILNSWVQEFLYNLSDTIKAFSILLLTDLCIGFHSPHGWELMIGYIYKDFGFAHYEQILSGLVSTFPVILDTIFKYWIFRYLNRVSPSLVVIYHAIND.

A run of 3 helical transmembrane segments spans residues 6–26 (AFIP…ISLC), 107–127 (ILHF…SFWG), and 189–209 (ILSG…KYWI).

It belongs to the CemA family.

Its subcellular location is the plastid. The protein localises to the chloroplast inner membrane. The enzyme catalyses K(+)(in) + H(+)(out) = K(+)(out) + H(+)(in). Its function is as follows. Contributes to K(+)/H(+) antiport activity by supporting proton efflux to control proton extrusion and homeostasis in chloroplasts in a light-dependent manner to modulate photosynthesis. Prevents excessive induction of non-photochemical quenching (NPQ) under continuous-light conditions. Indirectly promotes efficient inorganic carbon uptake into chloroplasts. The protein is Potassium/proton antiporter CemA of Arabidopsis thaliana (Mouse-ear cress).